A 192-amino-acid polypeptide reads, in one-letter code: Signal peptidase complex catalytic subunit sec11 (192 aa).

The Cytoplasmic portion of the chain corresponds to 1–18; that stretch reads MLSFLSSNLSSTRQSMAQ. A helical; Signal-anchor for type II membrane protein membrane pass occupies residues 19-39; that stretch reads VLNFALVLSTAFMLWKGLSVF. Topologically, residues 40–192 are lumenal; the sequence is TASSSPIVVV…GLMVILQREQ (153 aa). Residues S53, H92, and D133 each act as charge relay system in the active site. The segment at 177–188 is C-terminal short (CTS) helix; sequence VLLGIMGLMVIL.

This sequence belongs to the peptidase S26B family. In terms of assembly, component of the signal peptidase complex (SPC) composed of a catalytic subunit SEC11 and three accessory subunits SPC1, SPC2 and SPC3. The complex induces a local thinning of the ER membrane which is used to measure the length of the signal peptide (SP) h-region of protein substrates. This ensures the selectivity of the complex towards h-regions shorter than 18-20 amino acids. SPC associates with the translocon complex.

The protein localises to the endoplasmic reticulum membrane. The enzyme catalyses Cleavage of hydrophobic, N-terminal signal or leader sequences from secreted and periplasmic proteins.. In terms of biological role, catalytic component of the signal peptidase complex (SPC) which catalyzes the cleavage of N-terminal signal sequences from nascent proteins as they are translocated into the lumen of the endoplasmic reticulum. Specifically cleaves N-terminal signal peptides that contain a hydrophobic alpha-helix (h-region) shorter than 18-20 amino acids. In Aspergillus fumigatus (strain CBS 144.89 / FGSC A1163 / CEA10) (Neosartorya fumigata), this protein is Signal peptidase complex catalytic subunit sec11 (sec11).